A 448-amino-acid chain; its full sequence is tRNA-2-methylthio-N(6)-dimethylallyladenosine synthase (448 aa).

One can recognise an MTTase N-terminal domain in the interval 2 to 119; that stretch reads KKLYIKTFGC…LSDLIAQRRK (118 aa). Positions 11, 48, 82, 156, 160, and 163 each coordinate [4Fe-4S] cluster. The region spanning 142-375 is the Radical SAM core domain; that stretch reads RQTRGSAYVS…LALIEGQSNQ (234 aa). The TRAM domain occupies 378–444; sequence QKMLGKTERV…NYTLRGELVE (67 aa).

This sequence belongs to the methylthiotransferase family. MiaB subfamily. In terms of assembly, monomer. It depends on [4Fe-4S] cluster as a cofactor.

The protein localises to the cytoplasm. It catalyses the reaction N(6)-dimethylallyladenosine(37) in tRNA + (sulfur carrier)-SH + AH2 + 2 S-adenosyl-L-methionine = 2-methylsulfanyl-N(6)-dimethylallyladenosine(37) in tRNA + (sulfur carrier)-H + 5'-deoxyadenosine + L-methionine + A + S-adenosyl-L-homocysteine + 2 H(+). Catalyzes the methylthiolation of N6-(dimethylallyl)adenosine (i(6)A), leading to the formation of 2-methylthio-N6-(dimethylallyl)adenosine (ms(2)i(6)A) at position 37 in tRNAs that read codons beginning with uridine. In Polynucleobacter asymbioticus (strain DSM 18221 / CIP 109841 / QLW-P1DMWA-1) (Polynucleobacter necessarius subsp. asymbioticus), this protein is tRNA-2-methylthio-N(6)-dimethylallyladenosine synthase.